The following is a 134-amino-acid chain: Iron-sulfur cluster insertion protein ErpA (134 aa).

Positions 47, 126, and 128 each coordinate iron-sulfur cluster.

Belongs to the HesB/IscA family. As to quaternary structure, homodimer. Iron-sulfur cluster serves as cofactor.

Functionally, required for insertion of 4Fe-4S clusters for at least IspG. The chain is Iron-sulfur cluster insertion protein ErpA from Coxiella burnetii (strain RSA 331 / Henzerling II).